Consider the following 301-residue polypeptide: ATP synthase gamma chain (301 aa).

This sequence belongs to the ATPase gamma chain family. As to quaternary structure, F-type ATPases have 2 components, CF(1) - the catalytic core - and CF(0) - the membrane proton channel. CF(1) has five subunits: alpha(3), beta(3), gamma(1), delta(1), epsilon(1). CF(0) has three main subunits: a, b and c.

The protein resides in the cell inner membrane. Produces ATP from ADP in the presence of a proton gradient across the membrane. The gamma chain is believed to be important in regulating ATPase activity and the flow of protons through the CF(0) complex. This Bordetella bronchiseptica (strain ATCC BAA-588 / NCTC 13252 / RB50) (Alcaligenes bronchisepticus) protein is ATP synthase gamma chain.